The following is a 218-amino-acid chain: Ras-related protein R-Ras (218 aa).

A disordered region spans residues 1–30 (MSSGAASGTGRGRPRGGGPGPRDPPPGETH). The segment covering 7-20 (SGTGRGRPRGGGPG) has biased composition (gly residues). 36 to 44 (GGGGVGKSA) is a GTP binding site. The Effector region motif lies at 58-66 (YDPTIEDSY). Residues 83-87 (DTAGQ), 142-145 (NKAD), and 172-174 (SAK) contribute to the GTP site. Cys215 carries the post-translational modification Cysteine methyl ester. A lipid anchor (S-geranylgeranyl cysteine) is attached at Cys215. The propeptide at 216–218 (VLL) is removed in mature form.

This sequence belongs to the small GTPase superfamily. Ras family. As to quaternary structure, interacts with PLCE1. Interacts (active GTP-bound form preferentially) with RGS14. Interacts with OSBPL3. Interacts with ZDHHC19. Post-translationally, S-palmitoylated by ZDHHC19, leading to increased association with membranes and with rafts/caveolae as well as enhanced cell viability.

It localises to the cell membrane. It catalyses the reaction GTP + H2O = GDP + phosphate + H(+). GTP-binding protein with GTPase activity, likely involved in the regulation of MAPK signaling pathway and thereby controlling multiple cellular processes. Regulates the organization of the actin cytoskeleton. With OSPBL3, modulates integrin beta-1 (ITGB1) activity. The sequence is that of Ras-related protein R-Ras (Rras) from Rattus norvegicus (Rat).